A 410-amino-acid polypeptide reads, in one-letter code: MAFVNANYLKLKAGYLFPEIARRVNQFLQAHPDAPLIRLGIGDVTEPLPAACREAMIKAVEEMGDRATFKGYGPEQGYPWLREKIAAHDFQARGCDIDASEIFISDGSKCDTGNILDIFGDSNRIAVTDPVYPVYVDTNVMAGHTGEANERGEYAGLVYLPITAENHFTATLPSEPVDLIYLCFPNNPTGAVASREHLQAWVDYARAHKAILFFDAAYEAFITDPAIPHSIYEIPGARECAIEFRSFSKNAGFTGTRCAFTVVPKGLKGQTPSGDAVELWSLWQRRQSTKFNGVSYIVQRGAEAVYSEAGQAQVRELVTFYMENARLIREKLTQAGFEVYGGVNAPYVWLKTPAGMGSWDFFDKLLHTCFVVGTPGAGFGAAGEGYLRLSAFNSRENVVEAMDRVVTAFA.

Tyr-15 and Gly-42 together coordinate substrate. Residues Tyr-72, 108–109 (SK), Tyr-132, Asn-187, Tyr-218, and 246–248 (SFS) contribute to the pyridoxal 5'-phosphate site. Substrate contacts are provided by Lys-109, Tyr-132, and Asn-187. Position 249 is an N6-(pyridoxal phosphate)lysine (Lys-249). Residues Arg-257 and Asn-292 each coordinate pyridoxal 5'-phosphate. 2 residues coordinate substrate: Asn-292 and Arg-388.

Belongs to the class-I pyridoxal-phosphate-dependent aminotransferase family. LL-diaminopimelate aminotransferase subfamily. As to quaternary structure, homodimer. The cofactor is pyridoxal 5'-phosphate.

The enzyme catalyses (2S,6S)-2,6-diaminopimelate + 2-oxoglutarate = (S)-2,3,4,5-tetrahydrodipicolinate + L-glutamate + H2O + H(+). The protein operates within amino-acid biosynthesis; L-lysine biosynthesis via DAP pathway; LL-2,6-diaminopimelate from (S)-tetrahydrodipicolinate (aminotransferase route): step 1/1. In terms of biological role, involved in the synthesis of meso-diaminopimelate (m-DAP or DL-DAP), required for both lysine and peptidoglycan biosynthesis. Catalyzes the direct conversion of tetrahydrodipicolinate to LL-diaminopimelate. In Thermosynechococcus vestitus (strain NIES-2133 / IAM M-273 / BP-1), this protein is LL-diaminopimelate aminotransferase.